We begin with the raw amino-acid sequence, 182 residues long: uncharacterized protein (182 aa).

Residues arginine 151 to glutamine 172 are disordered. The span at phenylalanine 157–proline 169 shows a compositional bias: basic and acidic residues.

This is an uncharacterized protein from Mycobacterium tuberculosis (strain CDC 1551 / Oshkosh).